Consider the following 488-residue polypeptide: Cobyric acid synthase (488 aa).

Residues 247–440 (LLRVIVPVLP…VHGVFDEPTA (194 aa)) enclose the GATase cobBQ-type domain. The Nucleophile role is filled by C328. Residue H432 is part of the active site.

The protein belongs to the CobB/CobQ family. CobQ subfamily.

It functions in the pathway cofactor biosynthesis; adenosylcobalamin biosynthesis. Its function is as follows. Catalyzes amidations at positions B, D, E, and G on adenosylcobyrinic A,C-diamide. NH(2) groups are provided by glutamine, and one molecule of ATP is hydrogenolyzed for each amidation. The chain is Cobyric acid synthase from Cupriavidus pinatubonensis (strain JMP 134 / LMG 1197) (Cupriavidus necator (strain JMP 134)).